Consider the following 284-residue polypeptide: Isopentenyl-diphosphate Delta-isomerase II, chloroplastic (284 aa).

The transit peptide at 1 to 45 (MSASSLFNLPLIRLRSLALSSSFSSFRFAHRPLSSISPRKLPNFR) directs the protein to the chloroplast. Residue Ala-46 is modified to N-acetylalanine. Lys-88 serves as a coordination point for substrate. Residues His-92 and His-104 each contribute to the Mg(2+) site. The Nudix hydrolase domain occupies 102 to 254 (LLHRAFSVFL…GLKLSPWFRL (153 aa)). Substrate is bound by residues Arg-123 and Lys-127. Cys-139 is a catalytic residue. Ser-140 is a substrate binding site. The Nudix box signature appears at 140–170 (SHPLYRESELIQDNALGVRNAAQRKLLDELG). Mg(2+) is bound by residues Glu-199 and Glu-201. Glu-201 is an active-site residue.

It belongs to the IPP isomerase type 1 family. Mg(2+) serves as cofactor.

Its subcellular location is the plastid. The protein localises to the chloroplast. It catalyses the reaction isopentenyl diphosphate = dimethylallyl diphosphate. The protein operates within isoprenoid biosynthesis; dimethylallyl diphosphate biosynthesis; dimethylallyl diphosphate from isopentenyl diphosphate: step 1/1. Its pathway is porphyrin-containing compound metabolism; chlorophyll biosynthesis. Its function is as follows. Catalyzes the 1,3-allylic rearrangement of the homoallylic substrate isopentenyl (IPP) to its highly electrophilic allylic isomer, dimethylallyl diphosphate (DMAPP). The chain is Isopentenyl-diphosphate Delta-isomerase II, chloroplastic (IPP2) from Arabidopsis thaliana (Mouse-ear cress).